The following is a 145-amino-acid chain: Putative pre-16S rRNA nuclease (145 aa).

The protein belongs to the YqgF nuclease family.

The protein resides in the cytoplasm. Its function is as follows. Could be a nuclease involved in processing of the 5'-end of pre-16S rRNA. The sequence is that of Putative pre-16S rRNA nuclease from Pseudomonas fluorescens.